A 160-amino-acid polypeptide reads, in one-letter code: Troponin C, skeletal muscle (160 aa).

Thr2 is subject to N-acetylthreonine. EF-hand domains follow at residues 15-50, 51-86, 91-126, and 127-160; these read EMIA…LGQT, PTKE…QMKE, KSEE…SGEH, and VTDE…EGVQ. Ca(2+) contacts are provided by Asp28, Asp30, Asp34, Glu39, Asp64, Asp66, Ser68, Thr70, Glu75, Asp104, Asn106, Asp108, Tyr110, Glu115, Asp140, Asn142, Asp144, Arg146, and Glu151.

This sequence belongs to the troponin C family.

Troponin is the central regulatory protein of striated muscle contraction. Tn consists of three components: Tn-I which is the inhibitor of actomyosin ATPase, Tn-T which contains the binding site for tropomyosin and Tn-C. The binding of calcium to Tn-C abolishes the inhibitory action of Tn on actin filaments. This is Troponin C, skeletal muscle (TNNC2) from Homo sapiens (Human).